Reading from the N-terminus, the 152-residue chain is Protein-export protein SecB (152 aa).

Belongs to the SecB family. In terms of assembly, homotetramer, a dimer of dimers. One homotetramer interacts with 1 SecA dimer.

The protein localises to the cytoplasm. In terms of biological role, one of the proteins required for the normal export of preproteins out of the cell cytoplasm. It is a molecular chaperone that binds to a subset of precursor proteins, maintaining them in a translocation-competent state. It also specifically binds to its receptor SecA. The sequence is that of Protein-export protein SecB from Rickettsia massiliae (strain Mtu5).